We begin with the raw amino-acid sequence, 453 residues long: MEQQPSVPRSCTNVARETPMNLNIQSTTGTRYELSVPPDETVDGLKRRISQRLKVPKERLTLLHRETRLSSGKLQDLGISDGSRLTLLPSVEAGLMSQMSRPEQSVMQALESLTETQVNDFLSGRSPLTLALRVGDHMMFVQLQLAAQQSGASHLQHRHVITRGAEAGASPQYRTLHTSTSALSHLASCTPGSTPPTTLSPTASTHRDGPHSSPLTTSVFRSHGEGVAVSPCAEQVPCSSRGTEGTSSSASSRSRKPGAIIESFVNHAPGVFSGTFSGTLHPHCQDSAGRPRRDIGTILQILNDLLSATRHYQGMPPSLTTLRCHTQCASQARNPKATSPQSSEPQQTTHPVGHCQAQTRTCKPSGDRLRQTENRATRCKVERLQLLMHQKRLRRKARRDSRAPYHWMPTRKSSRTSSNSSTSSGEGSLEIDFEDSLWKPDVKAELNSEFVVA.

Residues 20–94 (MNLNIQSTTG…LTLLPSVEAG (75 aa)) form the Ubiquitin-like domain. Disordered regions lie at residues 185–219 (HLAS…TTSV), 231–256 (PCAE…RSRK), 330–374 (SQAR…QTEN), and 390–434 (QKRL…IDFE). 2 stretches are compositionally biased toward low complexity: residues 188–204 (SCTP…PTAS) and 239–252 (SSRG…SASS). The span at 330 to 362 (SQARNPKATSPQSSEPQQTTHPVGHCQAQTRTC) shows a compositional bias: polar residues. Residues 365 to 374 (SGDRLRQTEN) are compositionally biased toward basic and acidic residues. A compositionally biased stretch (basic residues) spans 390-399 (QKRLRRKARR). Low complexity predominate over residues 415-428 (RTSSNSSTSSGEGS).

The protein resides in the nucleus. The protein localises to the cytoplasm. It is found in the cytosol. It localises to the nucleolus. Facilitates ubiquitin-independent proteasomal degradation of polycomb protein CBX4. Plays a role in inhibiting the activity of glucokinase GCK and both glucose-induced and basal insulin secretion. The protein is Midnolin (midn) of Xenopus tropicalis (Western clawed frog).